Reading from the N-terminus, the 845-residue chain is Beta-mannosidase B (845 aa).

The tract at residues 1–20 is disordered; that stretch reads MSKLQQFPLSKGWSFRDSED. Asn252 carries N-linked (GlcNAc...) asparagine glycosylation. Catalysis depends on Glu432, which acts as the Proton donor. 2 N-linked (GlcNAc...) asparagine glycosylation sites follow: Asn717 and Asn723.

This sequence belongs to the glycosyl hydrolase 2 family. Beta-mannosidase B subfamily.

The enzyme catalyses Hydrolysis of terminal, non-reducing beta-D-mannose residues in beta-D-mannosides.. It functions in the pathway glycan metabolism; N-glycan degradation. Exoglycosidase that cleaves the single beta-linked mannose residue from the non-reducing end of beta-mannosidic oligosaccharides of various complexity and length. Prefers mannobiose over mannotriose and has no activity against polymeric mannan. Is also severely restricted by galactosyl substitutions at the +1 subsite. The protein is Beta-mannosidase B (mndB) of Neosartorya fischeri (strain ATCC 1020 / DSM 3700 / CBS 544.65 / FGSC A1164 / JCM 1740 / NRRL 181 / WB 181) (Aspergillus fischerianus).